Here is a 399-residue protein sequence, read N- to C-terminus: MSFDREEDQKLKFKTSKKLKVSSTFESMNLKDDLLRGIYSYGFEAPSSIQSRAITQIISGKDVIAQAQSGTGKTATFTIGLLQAIDLRKKDLQALILSPTRELASQIGQVVKNLGDYMNVNAFAITGGKTLKDDLKKMQKHGCQAVSGTPGRVLDMIKKQMLQTRNVQMLVLDEADELLSETLGFKQQIYDIFAKLPKNCQVVVVSATMNKDILEVTRKFMNDPVKILVKRDEISLEGIKQYVVNVDKEEWKFDTLCDIYDSLTITQCVIFCNTKKKVDWLSQRLIQSNFAVVSMHGDMKQEERDKVMNDFRTGHSRVLISTDVWARGIDVQQVSLVINYDLPEIIENYIHRIGRSGRFGRKGVAINFITKADLAKLREIEKFYSIKINPMPANFAELS.

A Q motif motif is present at residues Ser23–Ser51. Residues Ile54–Ile227 enclose the Helicase ATP-binding domain. Residue Ala67–Thr74 coordinates ATP. A DEAD box motif is present at residues Asp173–Asp176. The 162-residue stretch at Gly238–Ser399 folds into the Helicase C-terminal domain.

This sequence belongs to the DEAD box helicase family. DDX48/FAL1 subfamily.

The protein localises to the nucleus. It is found in the nucleolus. The enzyme catalyses ATP + H2O = ADP + phosphate + H(+). In terms of biological role, ATP-dependent RNA helicase involved in 40S ribosomal subunit biogenesis. Required for the processing and cleavage of 35S pre-rRNA at sites A0, A1, and A2, leading to mature 18S rRNA. This Saccharomyces cerevisiae (strain YJM789) (Baker's yeast) protein is ATP-dependent RNA helicase FAL1 (FAL1).